Here is a 726-residue protein sequence, read N- to C-terminus: Biotin--protein ligase (726 aa).

The interval 28-98 (EVKDQVSNKQ…SDRGGGPVEH (71 aa)) is disordered. Positions 43 to 75 (PKPEPSLEIKPEQDGMEHVGRDDPKALGEEPKQ) are enriched in basic and acidic residues. Phosphoserine is present on residues Ser147 and Ser299. The region spanning 463 to 652 (KQLGKVILFA…VLEKLIKEFQ (190 aa)) is the BPL/LPL catalytic domain.

The protein belongs to the biotin--protein ligase family. In terms of assembly, monomer. In terms of tissue distribution, widely expressed. Mostly expressed in muscle, placenta and to a lower extent in the brain, kidney, pancreas, liver and lung.

It localises to the cytoplasm. It is found in the mitochondrion. The enzyme catalyses apo-[methylmalonyl-CoA:pyruvate carboxytransferase] + biotin + ATP = holo-[methylmalonyl-CoA:pyruvate carboxytransferase] + AMP + diphosphate + H(+). It catalyses the reaction apo-[propionyl-CoA:carbon-dioxide ligase (ADP-forming)] + biotin + ATP = holo-[propionyl-CoA:carbon-dioxide ligase (ADP-forming)] + AMP + diphosphate + H(+). It carries out the reaction apo-[3-methylcrotonoyl-CoA:carbon-dioxide ligase (ADP-forming)] + biotin + ATP = holo-[3-methylcrotonoyl-CoA:carbon-dioxide ligase (ADP-forming)] + AMP + diphosphate + H(+). The catalysed reaction is biotin + L-lysyl-[protein] + ATP = N(6)-biotinyl-L-lysyl-[protein] + AMP + diphosphate + H(+). Functionally, biotin--protein ligase catalyzing the biotinylation of the 4 biotin-dependent carboxylases acetyl-CoA-carboxylase, pyruvate carboxylase, propionyl-CoA carboxylase, and methylcrotonyl-CoA carboxylase. This Homo sapiens (Human) protein is Biotin--protein ligase.